The primary structure comprises 501 residues: L-arabinose isomerase (501 aa).

Mn(2+) contacts are provided by glutamate 306, glutamate 333, histidine 350, and histidine 450.

The protein belongs to the arabinose isomerase family. Homohexamer. It depends on Mn(2+) as a cofactor.

It carries out the reaction beta-L-arabinopyranose = L-ribulose. Its pathway is carbohydrate degradation; L-arabinose degradation via L-ribulose; D-xylulose 5-phosphate from L-arabinose (bacterial route): step 1/3. Catalyzes the conversion of L-arabinose to L-ribulose. This Pectobacterium carotovorum subsp. carotovorum (strain PC1) protein is L-arabinose isomerase.